A 551-amino-acid polypeptide reads, in one-letter code: Arginine--tRNA ligase (551 aa).

The 'HIGH' region motif lies at Ala-123–Arg-133.

Belongs to the class-I aminoacyl-tRNA synthetase family. As to quaternary structure, monomer.

The protein resides in the cytoplasm. It carries out the reaction tRNA(Arg) + L-arginine + ATP = L-arginyl-tRNA(Arg) + AMP + diphosphate. This is Arginine--tRNA ligase from Chlorobium phaeobacteroides (strain DSM 266 / SMG 266 / 2430).